The primary structure comprises 354 residues: Caffeate O-methyltransferase-like protein 2 (354 aa).

S-adenosyl-L-homocysteine contacts are provided by glycine 198, aspartate 221, methionine 242, and lysine 255. Histidine 259 serves as the catalytic Proton acceptor. Active-site residues include glutamate 287 and glutamate 319.

Belongs to the class I-like SAM-binding methyltransferase superfamily. Cation-independent O-methyltransferase family. COMT subfamily.

The chain is Caffeate O-methyltransferase-like protein 2 from Oryza sativa subsp. japonica (Rice).